A 176-amino-acid chain; its full sequence is Large ribosomal subunit protein uL10 (176 aa).

The protein belongs to the universal ribosomal protein uL10 family. In terms of assembly, part of the ribosomal stalk of the 50S ribosomal subunit. The N-terminus interacts with L11 and the large rRNA to form the base of the stalk. The C-terminus forms an elongated spine to which L12 dimers bind in a sequential fashion forming a multimeric L10(L12)X complex.

Functionally, forms part of the ribosomal stalk, playing a central role in the interaction of the ribosome with GTP-bound translation factors. This chain is Large ribosomal subunit protein uL10, found in Mycobacteroides abscessus (strain ATCC 19977 / DSM 44196 / CCUG 20993 / CIP 104536 / JCM 13569 / NCTC 13031 / TMC 1543 / L948) (Mycobacterium abscessus).